A 467-amino-acid polypeptide reads, in one-letter code: ATP synthase subunit beta (467 aa).

Position 153 to 160 (153 to 160 (GGAGVGKT)) interacts with ATP.

It belongs to the ATPase alpha/beta chains family. As to quaternary structure, F-type ATPases have 2 components, CF(1) - the catalytic core - and CF(0) - the membrane proton channel. CF(1) has five subunits: alpha(3), beta(3), gamma(1), delta(1), epsilon(1). CF(0) has three main subunits: a(1), b(2) and c(9-12). The alpha and beta chains form an alternating ring which encloses part of the gamma chain. CF(1) is attached to CF(0) by a central stalk formed by the gamma and epsilon chains, while a peripheral stalk is formed by the delta and b chains.

The protein resides in the cell membrane. It catalyses the reaction ATP + H2O + 4 H(+)(in) = ADP + phosphate + 5 H(+)(out). In terms of biological role, produces ATP from ADP in the presence of a proton gradient across the membrane. The catalytic sites are hosted primarily by the beta subunits. This Lactiplantibacillus plantarum (strain ATCC BAA-793 / NCIMB 8826 / WCFS1) (Lactobacillus plantarum) protein is ATP synthase subunit beta.